Consider the following 347-residue polypeptide: Endophilin-A3 (347 aa).

Positions 1–21 are membrane-binding amphipathic helix; it reads MSVAGLKKQFHKASQLFSEKI. Positions 18–249 constitute a BAR domain; the sequence is SEKISGAEGT…LQMRISAASS (232 aa). The segment at 60-87 is required for dimerization upon membrane association; that stretch reads PNPAYRAKLGMLNTVSKIRGQVKTTGYP. Residues 181–201 are a coiled coil; it reads EEVRQAVEKFEESKELAERSM. Residues 218–254 form an interaction with ARC region; the sequence is FIEAALDYHRQSTEILQELQSKLQMRISAASSVPRRE. A disordered region spans residues 248–271; the sequence is SSVPRREYKPRPVKRSSSELNGVS. Phosphoserine is present on Ser-265. One can recognise an SH3 domain in the interval 285 to 344; that stretch reads MDQPCCRGLYDFEPENQGELGFKEGDIITLTNQIDENWYEGMIHGESGFFPINYVEVIVP.

This sequence belongs to the endophilin family. In terms of assembly, interacts with ARC. Interacts with DNM1, SGIP1 and SYNJ1. Interacts with the huntingtin exon 1 protein (HDEX1P) containing a glutamine repeat in the pathological range and promotes formation of insoluble polyglutamine-containing aggregates in vivo. Interacts with DYDC1. Interacts with FASLG. Interacts with ATXN2. Interacts with BIN2. Brain and testis.

The protein resides in the cytoplasm. It is found in the early endosome membrane. Functionally, implicated in endocytosis. May recruit other proteins to membranes with high curvature. The polypeptide is Endophilin-A3 (SH3GL3) (Homo sapiens (Human)).